The primary structure comprises 296 residues: Nucleotide-binding protein M28_Spy0517 (296 aa).

13–20 (GMSGAGKT) is an ATP binding site. 63 to 66 (DMRS) is a GTP binding site.

This sequence belongs to the RapZ-like family.

Displays ATPase and GTPase activities. This chain is Nucleotide-binding protein M28_Spy0517, found in Streptococcus pyogenes serotype M28 (strain MGAS6180).